The chain runs to 444 residues: Acyl-CoA 6-desaturase (444 aa).

The Cytoplasmic portion of the chain corresponds to 1 to 131 (MGKGGNQGEG…DMNLFKTNHV (131 aa)). The 78-residue stretch at 18 to 95 (MPTFSWEEIQ…LKPLLIGELA (78 aa)) folds into the Cytochrome b5 heme-binding domain. The helical transmembrane segment at 132 to 152 (FFLLLLAHIIALESIAWFTVF) threads the bilayer. Residues 153–157 (YFGNG) lie on the Lumenal side of the membrane. The helical transmembrane segment at 158 to 178 (WIPTLITAFVLATSQAQAGWL) threads the bilayer. Topologically, residues 179-264 (QHDYGHLSVY…KYLPYNHQHE (86 aa)) are cytoplasmic. Positions 180–184 (HDYGH) match the Histidine box-1 motif. The short motif at 217–221 (HFQHH) is the Histidine box-2 element. The helical transmembrane segment at 265–285 (YFFLIGPPLLIPMYFQYQIIM) threads the bilayer. Topologically, residues 286–305 (TMIVHKNWVDLAWAISYYIR) are lumenal. Residues 306-326 (FFVTYIPFYGILGALLFLNFI) traverse the membrane as a helical segment. The Cytoplasmic segment spans residues 327-444 (RFLESHWFVW…KLWLDAYLHK (118 aa)). Residues 382–386 (QIEHH) carry the Histidine box-3 motif.

It belongs to the fatty acid desaturase type 1 family.

The protein resides in the endoplasmic reticulum membrane. The catalysed reaction is (9Z,12Z)-octadecadienoyl-CoA + 2 Fe(II)-[cytochrome b5] + O2 + 2 H(+) = (6Z,9Z,12Z)-octadecatrienoyl-CoA + 2 Fe(III)-[cytochrome b5] + 2 H2O. It carries out the reaction (9Z,12Z,15Z)-octadecatrienoyl-CoA + 2 Fe(II)-[cytochrome b5] + O2 + 2 H(+) = (6Z,9Z,12Z,15Z)-octadecatetraenoyl-CoA + 2 Fe(III)-[cytochrome b5] + 2 H2O. It catalyses the reaction (9Z,12Z,15Z,18Z,21Z)-tetracosapentaenoyl-CoA + 2 Fe(II)-[cytochrome b5] + O2 + 2 H(+) = (6Z,9Z,12Z,15Z,18Z,21Z)-tetracosahexaenoyl-CoA + 2 Fe(III)-[cytochrome b5] + 2 H2O. The enzyme catalyses (11E)-octadecenoyl-CoA + 2 Fe(II)-[cytochrome b5] + O2 + 2 H(+) = (6Z,11E)-octadecadienoyl-CoA + 2 Fe(III)-[cytochrome b5] + 2 H2O. The catalysed reaction is (11Z,14Z)-eicosadienoyl-CoA + 2 Fe(II)-[cytochrome b5] + O2 + 2 H(+) = (8Z,11Z,14Z)-eicosatrienoyl-CoA + 2 Fe(III)-[cytochrome b5] + 2 H2O. It carries out the reaction (11Z,14Z,17Z)-eicosatrienoyl-CoA + 2 Fe(II)-[cytochrome b5] + O2 + 2 H(+) = (8Z,11Z,14Z,17Z)-eicosatetraenoyl-CoA + 2 Fe(III)-[cytochrome b5] + 2 H2O. Its pathway is lipid metabolism; polyunsaturated fatty acid biosynthesis. Functionally, involved in the biosynthesis of highly unsaturated fatty acids (HUFA) from the essential polyunsaturated fatty acids (PUFA) linoleic acid (LA) (18:2n-6) and alpha-linolenic acid (ALA) (18:3n-3) precursors, acting as a fatty acyl-coenzyme A (CoA) desaturase that introduces a cis double bond at carbon 6 of the fatty acyl chain. Catalyzes the first and rate limiting step in this pathway which is the desaturation of LA (18:2n-6) and ALA (18:3n-3) into gamma-linoleate (GLA) (18:3n-6) and stearidonate (18:4n-3), respectively. Subsequently, in the biosynthetic pathway of HUFA n-3 series, it desaturates tetracosapentaenoate (24:5n-3) to tetracosahexaenoate (24:6n-3), which is then converted to docosahexaenoate (DHA)(22:6n-3), an important lipid for nervous system function. It can also desaturate (11E)-octadecenoate (trans-vaccenoate) at carbon 6 generating (6Z,11E)-octadecadienoate. In addition to Delta-6 activity, this enzyme exhibits Delta-8 activity with slight biases toward n-3 fatty acyl-CoA substrates. This Macaca fascicularis (Crab-eating macaque) protein is Acyl-CoA 6-desaturase (FADS2).